The primary structure comprises 245 residues: 1-(5-phosphoribosyl)-5-[(5-phosphoribosylamino)methylideneamino] imidazole-4-carboxamide isomerase (245 aa).

Catalysis depends on D8, which acts as the Proton acceptor. D130 functions as the Proton donor in the catalytic mechanism.

It belongs to the HisA/HisF family.

It localises to the cytoplasm. The catalysed reaction is 1-(5-phospho-beta-D-ribosyl)-5-[(5-phospho-beta-D-ribosylamino)methylideneamino]imidazole-4-carboxamide = 5-[(5-phospho-1-deoxy-D-ribulos-1-ylimino)methylamino]-1-(5-phospho-beta-D-ribosyl)imidazole-4-carboxamide. It functions in the pathway amino-acid biosynthesis; L-histidine biosynthesis; L-histidine from 5-phospho-alpha-D-ribose 1-diphosphate: step 4/9. In Ectopseudomonas mendocina (strain ymp) (Pseudomonas mendocina), this protein is 1-(5-phosphoribosyl)-5-[(5-phosphoribosylamino)methylideneamino] imidazole-4-carboxamide isomerase.